We begin with the raw amino-acid sequence, 403 residues long: Protein-export membrane protein SecD (403 aa).

Helical transmembrane passes span 14-34 (VILL…MGIQ), 238-258 (FAEG…VILI), 265-285 (ILVL…LGAA), 294-314 (LAAI…QIII), 336-356 (FFII…LAYI), and 365-385 (IGLL…GVFI).

It belongs to the SecD/SecF family. SecD subfamily. As to quaternary structure, part of the protein translocation apparatus. Forms a complex with SecF.

Its subcellular location is the cell membrane. Its function is as follows. Involved in protein export. The sequence is that of Protein-export membrane protein SecD from Methanothermobacter thermautotrophicus (strain ATCC 29096 / DSM 1053 / JCM 10044 / NBRC 100330 / Delta H) (Methanobacterium thermoautotrophicum).